The chain runs to 265 residues: Hydroxyethylthiazole kinase (265 aa).

M50 is a binding site for substrate. Residues R125 and T171 each contribute to the ATP site. Residue G198 coordinates substrate.

Belongs to the Thz kinase family. Mg(2+) is required as a cofactor.

It carries out the reaction 5-(2-hydroxyethyl)-4-methylthiazole + ATP = 4-methyl-5-(2-phosphooxyethyl)-thiazole + ADP + H(+). Its pathway is cofactor biosynthesis; thiamine diphosphate biosynthesis; 4-methyl-5-(2-phosphoethyl)-thiazole from 5-(2-hydroxyethyl)-4-methylthiazole: step 1/1. Its function is as follows. Catalyzes the phosphorylation of the hydroxyl group of 4-methyl-5-beta-hydroxyethylthiazole (THZ). The protein is Hydroxyethylthiazole kinase of Cronobacter sakazakii (strain ATCC BAA-894) (Enterobacter sakazakii).